The sequence spans 440 residues: Ribosomal protein uS12 methylthiotransferase RimO (440 aa).

An MTTase N-terminal domain is found at 5-115; it reads PTVGFVSLGC…VVNAVHEVVP (111 aa). Residues Cys-14, Cys-50, Cys-79, Cys-148, Cys-152, and Cys-155 each coordinate [4Fe-4S] cluster. Residues 134–372 form the Radical SAM core domain; sequence LTPRHYAYLK…MAHQQAISAA (239 aa). One can recognise a TRAM domain in the interval 375–440; it reads QLKVGKELDV…DEYDLWAEVI (66 aa).

The protein belongs to the methylthiotransferase family. RimO subfamily. It depends on [4Fe-4S] cluster as a cofactor.

The protein resides in the cytoplasm. The enzyme catalyses L-aspartate(89)-[ribosomal protein uS12]-hydrogen + (sulfur carrier)-SH + AH2 + 2 S-adenosyl-L-methionine = 3-methylsulfanyl-L-aspartate(89)-[ribosomal protein uS12]-hydrogen + (sulfur carrier)-H + 5'-deoxyadenosine + L-methionine + A + S-adenosyl-L-homocysteine + 2 H(+). In terms of biological role, catalyzes the methylthiolation of an aspartic acid residue of ribosomal protein uS12. In Stutzerimonas stutzeri (strain A1501) (Pseudomonas stutzeri), this protein is Ribosomal protein uS12 methylthiotransferase RimO.